We begin with the raw amino-acid sequence, 318 residues long: Lysophospholipase D GDPD3 (318 aa).

Residues 1 to 2 are Cytoplasmic-facing; it reads MS. A helical membrane pass occupies residues 3–23; the sequence is LLLYYALPALGSYAMLSIFFL. Over 24–198 the chain is Extracellular; that stretch reads RRPHLLHTPR…KAANPEMPLS (175 aa). One can recognise a GP-PDE domain in the interval 39-308; that stretch reads IRLGAHRGGS…DYPTALRHYL (270 aa). E71, D73, and H86 together coordinate a divalent metal cation. A helical membrane pass occupies residues 199–221; that stretch reads FTISRGFWVLLSYYLGLLPFIPI. Topologically, residues 222-318 are cytoplasmic; the sequence is PEKFFFCFLP…DNHGPAARTS (97 aa).

It belongs to the glycerophosphoryl diester phosphodiesterase family. Widely expressed, with high level in kidney and ovary.

It localises to the membrane. The protein localises to the cytoplasm. The protein resides in the perinuclear region. It is found in the endoplasmic reticulum. The enzyme catalyses 1-hexadecanoyl-sn-glycero-3-phosphocholine + H2O = 1-hexadecanoyl-sn-glycero-3-phosphate + choline + H(+). It catalyses the reaction 1-hexadecanoyl-sn-glycero-3-phosphocholine + H2O = sn-glycerol 3-phosphocholine + hexadecanoate + H(+). It carries out the reaction 1-O-(1Z-octadecenyl)-sn-glycero-3-phospho-N-hexadecanoyl-ethanolamine + H2O = 1-O-(1Z-octadecenyl)-sn-glycero-3-phosphate + N-hexadecanoylethanolamine + H(+). The catalysed reaction is N-(5Z,8Z,11Z,14Z-eicosatetraenoyl)-1-(9Z-octadecenoyl)-sn-glycero-3-phosphoethanolamine + H2O = N-(5Z,8Z,11Z,14Z-eicosatetraenoyl)-ethanolamine + 1-(9Z-octadecenoyl)-sn-glycero-3-phosphate + H(+). The enzyme catalyses N,1-di-(9Z-octadecenoyl)-sn-glycero-3-phosphoethanolamine + H2O = N-(9Z-octadecenoyl) ethanolamine + 1-(9Z-octadecenoyl)-sn-glycero-3-phosphate + H(+). It catalyses the reaction N-hexadecanoyl-1-(9Z-octadecenoyl)-sn-glycero-3-phosphoethanolamine + H2O = N-hexadecanoylethanolamine + 1-(9Z-octadecenoyl)-sn-glycero-3-phosphate + H(+). It carries out the reaction 1-O-hexadecyl-sn-glycero-3-phosphocholine + H2O = 1-O-hexadecyl-sn-glycero-3-phosphate + choline + H(+). Its activity is regulated as follows. Lysophospholipase D activity is stimulated by calcium. Loss of lysophospholipase D activity in presence of EDTA. Its function is as follows. Hydrolyzes lysoglycerophospholipids to produce lysophosphatidic acid (LPA) and the corresponding amines. Shows a preference for 1-O-alkyl-sn-glycero-3-phosphocholine (lyso-PAF), lysophosphatidylcholine (lyso-PC) and N-acylethanolamine lysophospholipids. Does not display glycerophosphodiester phosphodiesterase activity, since it cannot hydrolyze either glycerophosphoinositol or glycerophosphocholine. This Homo sapiens (Human) protein is Lysophospholipase D GDPD3.